Here is a 255-residue protein sequence, read N- to C-terminus: tRNA (guanine-N(1)-)-methyltransferase (255 aa).

S-adenosyl-L-methionine contacts are provided by residues Gly117 and 137–142 (IGDYVL).

It belongs to the RNA methyltransferase TrmD family. Homodimer.

It is found in the cytoplasm. The enzyme catalyses guanosine(37) in tRNA + S-adenosyl-L-methionine = N(1)-methylguanosine(37) in tRNA + S-adenosyl-L-homocysteine + H(+). Specifically methylates guanosine-37 in various tRNAs. This is tRNA (guanine-N(1)-)-methyltransferase from Chromobacterium violaceum (strain ATCC 12472 / DSM 30191 / JCM 1249 / CCUG 213 / NBRC 12614 / NCIMB 9131 / NCTC 9757 / MK).